The following is a 430-amino-acid chain: Histone acetyltransferase type B subunit 2 (430 aa).

5 WD repeats span residues 129–169 (PHDG…ALTT), 180–220 (GHTA…FTSS), 233–273 (RHTD…EEEA), 279–319 (AHSK…QRLH), and 323–363 (GHED…EEQT). The interval 365 to 369 (EDAED) is interaction with the histone H4 N-terminus. The WD 6 repeat unit spans residues 380-420 (GHTNRISEFSWCPNERWVVGSLADDNILQIWSPSRVIWGRD). Position 425 is a phosphoserine (Ser425).

Belongs to the WD repeat RBAP46/RBAP48/MSI1 family. Component of the HAT-B complex composed of at least hat1 and hat2. The HAT-B complex binds to histone H4 tail. Component of the CENP-A recruiting complex composed of at least mis16, mis19, mis19 and mis20.

It localises to the cytoplasm. The protein resides in the nucleus. Its subcellular location is the chromosome. The protein localises to the centromere. It is found in the kinetochore. Its function is as follows. Regulatory subunit of the histone acetylase B (HAT-B) complex. The complex acetylates 'Lys-12' of histone H4 which is required for telomeric silencing. Component of the CENP-A recruiting complex that ensures the integrity of mitotic spindles through maintenance of kinetochore factors mis6/CENP-I and cnp1/CENP-A. Maintains the deacetylated state of histones specifically in the central core of the centromeres. The polypeptide is Histone acetyltransferase type B subunit 2 (mis16) (Schizosaccharomyces pombe (strain 972 / ATCC 24843) (Fission yeast)).